We begin with the raw amino-acid sequence, 101 residues long: MKYEKLEPAAIDETVAGLVGWTLAADRLSISKSYKFRNFVEAFGFMTEAALTAEKLNHHPEWFNVYSRVDVKLTTHDANGLTDHDVKLAKAMEKAAARRAD.

It belongs to the pterin-4-alpha-carbinolamine dehydratase family.

It carries out the reaction (4aS,6R)-4a-hydroxy-L-erythro-5,6,7,8-tetrahydrobiopterin = (6R)-L-erythro-6,7-dihydrobiopterin + H2O. This chain is Putative pterin-4-alpha-carbinolamine dehydratase, found in Rhizobium rhizogenes (strain K84 / ATCC BAA-868) (Agrobacterium radiobacter).